The following is a 577-amino-acid chain: Protein GPR108 (577 aa).

Residues M1–G34 form the signal peptide. N59 and N111 each carry an N-linked (GlcNAc...) asparagine glycan. The tract at residues L144–D224 is disordered. N-linked (GlcNAc...) asparagine glycosylation is found at N233 and N237. Transmembrane regions (helical) follow at residues L296–C316, I325–I345, L369–V389, I400–S420, I434–I454, V482–V502, and W506–G526.

Belongs to the LU7TM family.

It localises to the golgi apparatus. It is found in the cis-Golgi network membrane. Its subcellular location is the trans-Golgi network membrane. The protein resides in the golgi apparatus membrane. May play a role in intracellular immune modulation by activating NF-kappaB response and attenuating Toll-like-receptor response. The sequence is that of Protein GPR108 (Gpr108) from Rattus norvegicus (Rat).